Reading from the N-terminus, the 132-residue chain is MTMTDPLSDMFSRIRNANQVLHKKVTVPSSRLKVSIADLLKREGYILDYSVIDEHPGQLLVIELKYGPDKSRALVGLKRVSKPGLRVYAKSSNLPEVFGGLGIAILSTSSGLLTCSQARKKGVGGEVLAYAW.

The protein belongs to the universal ribosomal protein uS8 family. As to quaternary structure, part of the 30S ribosomal subunit. Contacts proteins S5 and S12.

One of the primary rRNA binding proteins, it binds directly to 16S rRNA central domain where it helps coordinate assembly of the platform of the 30S subunit. The sequence is that of Small ribosomal subunit protein uS8 from Tropheryma whipplei (strain Twist) (Whipple's bacillus).